A 213-amino-acid polypeptide reads, in one-letter code: 2,3-bisphosphoglycerate-dependent phosphoglycerate mutase (213 aa).

Residues 8–15 (RHGQSEWN), 21–22 (TG), Arg58, 84–87 (ERNY), Lys95, 111–112 (RR), and 155–156 (GN) each bind substrate. His9 serves as the catalytic Tele-phosphohistidine intermediate. Glu84 acts as the Proton donor/acceptor in catalysis.

It belongs to the phosphoglycerate mutase family. BPG-dependent PGAM subfamily.

It catalyses the reaction (2R)-2-phosphoglycerate = (2R)-3-phosphoglycerate. It participates in carbohydrate degradation; glycolysis; pyruvate from D-glyceraldehyde 3-phosphate: step 3/5. Functionally, catalyzes the interconversion of 2-phosphoglycerate and 3-phosphoglycerate. This is 2,3-bisphosphoglycerate-dependent phosphoglycerate mutase from Cytophaga hutchinsonii (strain ATCC 33406 / DSM 1761 / CIP 103989 / NBRC 15051 / NCIMB 9469 / D465).